The primary structure comprises 197 residues: Rac-like GTP-binding protein 5 (197 aa).

13 to 20 (GDGAVGKT) is a GTP binding site. Positions 35–43 (YVPTVFDNF) match the Effector region motif. GTP contacts are provided by residues 60–64 (DTAGQ) and 118–121 (TKLD). The residue at position 194 (cysteine 194) is a Cysteine methyl ester. Cysteine 194 carries S-geranylgeranyl cysteine lipidation. Positions 195–197 (AIL) are cleaved as a propeptide — removed in mature form.

Belongs to the small GTPase superfamily. Rho family.

Its subcellular location is the cytoplasm. It localises to the membrane. Functionally, inactive GDP-bound Rho GTPases reside in the cytosol, are found in a complex with Rho GDP-dissociation inhibitors (Rho GDIs), and are released from the GDI protein in order to translocate to membranes upon activation. The chain is Rac-like GTP-binding protein 5 (RAC5) from Oryza sativa subsp. japonica (Rice).